We begin with the raw amino-acid sequence, 597 residues long: Putative lipase ATG15 (597 aa).

Residues 1–15 lie on the Cytoplasmic side of the membrane; the sequence is MTLEKNRHANKGTSW. A helical; Signal-anchor for type II membrane protein transmembrane segment spans residues 16–36; that stretch reads TWMIYKFVVGVITVAILVLFI. The Lumenal portion of the chain corresponds to 37–597; that stretch reads TQKSVSQAQD…DDDEDTFERK (561 aa). Residues asparagine 195, asparagine 262, and asparagine 346 are each glycosylated (N-linked (GlcNAc...) asparagine). Serine 364 serves as the catalytic Charge relay system. Asparagine 481 carries an N-linked (GlcNAc...) asparagine glycan. The interval 507–570 is disordered; sequence EKDEPKLPNP…PTDQDPPKKC (64 aa). Over residues 519-554 the composition is skewed to low complexity; the sequence is SSSKSTLSTKTTSLKSSSTYSGSTSSSTVTKTTQTS.

This sequence belongs to the AB hydrolase superfamily. Lipase family. As to quaternary structure, binds to both phosphatidylinositol (PI) and phosphatidylinositol 3,5-bisphosphate (PIP2).

It localises to the endosome. The protein resides in the multivesicular body membrane. It is found in the prevacuolar compartment membrane. It carries out the reaction a triacylglycerol + H2O = a diacylglycerol + a fatty acid + H(+). Its function is as follows. Lipase which is essential for lysis of subvacuolar cytoplasm to vacuole targeted bodies and intravacuolar autophagic bodies. Involved in the lysis of intravacuolar multivesicular body (MVB) vesicles. The intravacuolar membrane disintegration by ATG15 is critical to life span extension. In Candida albicans (strain SC5314 / ATCC MYA-2876) (Yeast), this protein is Putative lipase ATG15 (ATG15).